A 366-amino-acid chain; its full sequence is Cobalt-precorrin-5B C(1)-methyltransferase (366 aa).

Belongs to the CbiD family.

It carries out the reaction Co-precorrin-5B + S-adenosyl-L-methionine = Co-precorrin-6A + S-adenosyl-L-homocysteine. It functions in the pathway cofactor biosynthesis; adenosylcobalamin biosynthesis; cob(II)yrinate a,c-diamide from sirohydrochlorin (anaerobic route): step 6/10. Catalyzes the methylation of C-1 in cobalt-precorrin-5B to form cobalt-precorrin-6A. This is Cobalt-precorrin-5B C(1)-methyltransferase from Pseudomonas aeruginosa (strain LESB58).